We begin with the raw amino-acid sequence, 429 residues long: Adenylosuccinate synthetase (429 aa).

GTP contacts are provided by residues 12 to 18 and 40 to 42; these read GDEGKGK and GHT. The active-site Proton acceptor is the Asp13. Asp13 and Gly40 together coordinate Mg(2+). Residues 13 to 16, 38 to 41, Thr128, Arg142, Gln223, Thr238, and Arg302 each bind IMP; these read DEGK and NAGH. Catalysis depends on His41, which acts as the Proton donor. 298-304 is a binding site for substrate; the sequence is VNTGRKR. GTP contacts are provided by residues Arg304, 330 to 332, and 412 to 414; these read KLD and GVG.

The protein belongs to the adenylosuccinate synthetase family. As to quaternary structure, homodimer. The cofactor is Mg(2+).

It localises to the cytoplasm. It carries out the reaction IMP + L-aspartate + GTP = N(6)-(1,2-dicarboxyethyl)-AMP + GDP + phosphate + 2 H(+). Its pathway is purine metabolism; AMP biosynthesis via de novo pathway; AMP from IMP: step 1/2. Its function is as follows. Plays an important role in the de novo pathway of purine nucleotide biosynthesis. Catalyzes the first committed step in the biosynthesis of AMP from IMP. The protein is Adenylosuccinate synthetase of Corynebacterium jeikeium (strain K411).